The following is a 240-amino-acid chain: Regulatory protein RecX (240 aa).

Belongs to the RecX family.

It is found in the cytoplasm. In terms of biological role, modulates RecA activity. The sequence is that of Regulatory protein RecX from Lacticaseibacillus paracasei (strain ATCC 334 / BCRC 17002 / CCUG 31169 / CIP 107868 / KCTC 3260 / NRRL B-441) (Lactobacillus paracasei).